The sequence spans 413 residues: Prophage integrase IntA (413 aa).

One can recognise a Core-binding (CB) domain in the interval 105–186 (NTFLLVAERW…RINEVMIYAQ (82 aa)). The Tyr recombinase domain occupies 209-386 (KNMPSIRPDQ…DYLEQRRPMM (178 aa)). Catalysis depends on residues arginine 248, lysine 275, histidine 337, arginine 340, and histidine 363. Tyrosine 373 serves as the catalytic O-(3'-phospho-DNA)-tyrosine intermediate.

The protein belongs to the 'phage' integrase family.

Integrase is necessary for integration of the phage into the host genome by site-specific recombination. In conjunction with excisionase, integrase is also necessary for excision of the prophage from the host genome. Part of the cryptic P4-like prophage CP4-57, it excises the prophage when overexpressed, which also requires integration host factor (encoded by ihfA and ihfB). Overexpression of AlpA leads to excision of the CP4-57 prophage, which inactivates ssrA (the gene upstream of the prophage) that encodes tmRNA which is required to rescue stalled ribosomes in a process known as trans-translation. In Escherichia coli (strain K12), this protein is Prophage integrase IntA (intA).